A 468-amino-acid chain; its full sequence is Na(+)/H(+) antiporter NhaA (468 aa).

Helical transmembrane passes span 32 to 52 (FLHI…IALL), 83 to 103 (LHFW…GMEI), 119 to 139 (ALPM…YLAI), 148 to 168 (GWAV…ALLG), 178 to 198 (FLLA…AVAF), 205 to 225 (GGFL…WIGV), 320 to 340 (ALHP…NAGV), 354 to 374 (GAMF…IVSV), 397 to 417 (LVGL…TLAF), and 428 to 448 (LGVL…GFIY).

This sequence belongs to the NhaA Na(+)/H(+) (TC 2.A.33) antiporter family.

It is found in the cell inner membrane. The enzyme catalyses Na(+)(in) + 2 H(+)(out) = Na(+)(out) + 2 H(+)(in). In terms of biological role, na(+)/H(+) antiporter that extrudes sodium in exchange for external protons. The protein is Na(+)/H(+) antiporter NhaA of Cupriavidus necator (strain ATCC 17699 / DSM 428 / KCTC 22496 / NCIMB 10442 / H16 / Stanier 337) (Ralstonia eutropha).